The primary structure comprises 65 residues: uncharacterized protein (65 aa).

The ompR/PhoB-type DNA-binding region spans 1–65 (MIALSVCWQI…ETGIGYRFML (65 aa)).

This is an uncharacterized protein from Escherichia coli (strain K12).